A 276-amino-acid polypeptide reads, in one-letter code: Probable endonuclease 4 (276 aa).

Zn(2+) is bound by residues His-70, His-108, Glu-143, Asp-176, His-179, His-210, Asp-223, His-225, and Glu-255.

The protein belongs to the AP endonuclease 2 family. The cofactor is Zn(2+).

It catalyses the reaction Endonucleolytic cleavage to 5'-phosphooligonucleotide end-products.. Functionally, endonuclease IV plays a role in DNA repair. It cleaves phosphodiester bonds at apurinic or apyrimidinic (AP) sites, generating a 3'-hydroxyl group and a 5'-terminal sugar phosphate. The chain is Probable endonuclease 4 from Mesomycoplasma hyopneumoniae (strain 7448) (Mycoplasma hyopneumoniae).